A 318-amino-acid chain; its full sequence is Lipoyl synthase 1 (318 aa).

The segment at aspartate 6–aspartate 32 is disordered. The [4Fe-4S] cluster site is built by cysteine 60, cysteine 65, cysteine 71, cysteine 86, cysteine 90, cysteine 93, and serine 299. Residues tryptophan 72 to leucine 288 enclose the Radical SAM core domain.

Belongs to the radical SAM superfamily. Lipoyl synthase family. [4Fe-4S] cluster serves as cofactor.

It is found in the cytoplasm. The catalysed reaction is [[Fe-S] cluster scaffold protein carrying a second [4Fe-4S](2+) cluster] + N(6)-octanoyl-L-lysyl-[protein] + 2 oxidized [2Fe-2S]-[ferredoxin] + 2 S-adenosyl-L-methionine + 4 H(+) = [[Fe-S] cluster scaffold protein] + N(6)-[(R)-dihydrolipoyl]-L-lysyl-[protein] + 4 Fe(3+) + 2 hydrogen sulfide + 2 5'-deoxyadenosine + 2 L-methionine + 2 reduced [2Fe-2S]-[ferredoxin]. Its pathway is protein modification; protein lipoylation via endogenous pathway; protein N(6)-(lipoyl)lysine from octanoyl-[acyl-carrier-protein]: step 2/2. Catalyzes the radical-mediated insertion of two sulfur atoms into the C-6 and C-8 positions of the octanoyl moiety bound to the lipoyl domains of lipoate-dependent enzymes, thereby converting the octanoylated domains into lipoylated derivatives. This Bradyrhizobium diazoefficiens (strain JCM 10833 / BCRC 13528 / IAM 13628 / NBRC 14792 / USDA 110) protein is Lipoyl synthase 1.